The chain runs to 267 residues: Phosphatidylserine decarboxylase proenzyme (267 aa).

Catalysis depends on charge relay system; for autoendoproteolytic cleavage activity residues Asp78, His132, and Ser236. Residue Ser236 is the Schiff-base intermediate with substrate; via pyruvic acid; for decarboxylase activity of the active site. Ser236 is subject to Pyruvic acid (Ser); by autocatalysis.

This sequence belongs to the phosphatidylserine decarboxylase family. PSD-B subfamily. Prokaryotic type I sub-subfamily. In terms of assembly, heterodimer of a large membrane-associated beta subunit and a small pyruvoyl-containing alpha subunit. The cofactor is pyruvate. Post-translationally, is synthesized initially as an inactive proenzyme. Formation of the active enzyme involves a self-maturation process in which the active site pyruvoyl group is generated from an internal serine residue via an autocatalytic post-translational modification. Two non-identical subunits are generated from the proenzyme in this reaction, and the pyruvate is formed at the N-terminus of the alpha chain, which is derived from the carboxyl end of the proenzyme. The autoendoproteolytic cleavage occurs by a canonical serine protease mechanism, in which the side chain hydroxyl group of the serine supplies its oxygen atom to form the C-terminus of the beta chain, while the remainder of the serine residue undergoes an oxidative deamination to produce ammonia and the pyruvoyl prosthetic group on the alpha chain. During this reaction, the Ser that is part of the protease active site of the proenzyme becomes the pyruvoyl prosthetic group, which constitutes an essential element of the active site of the mature decarboxylase.

It localises to the cell membrane. The enzyme catalyses a 1,2-diacyl-sn-glycero-3-phospho-L-serine + H(+) = a 1,2-diacyl-sn-glycero-3-phosphoethanolamine + CO2. The protein operates within phospholipid metabolism; phosphatidylethanolamine biosynthesis; phosphatidylethanolamine from CDP-diacylglycerol: step 2/2. Catalyzes the formation of phosphatidylethanolamine (PtdEtn) from phosphatidylserine (PtdSer). This chain is Phosphatidylserine decarboxylase proenzyme, found in Helicobacter pylori (strain J99 / ATCC 700824) (Campylobacter pylori J99).